Consider the following 92-residue polypeptide: Large ribosomal subunit protein eL31 (92 aa).

The protein belongs to the eukaryotic ribosomal protein eL31 family.

This chain is Large ribosomal subunit protein eL31, found in Pyrobaculum arsenaticum (strain DSM 13514 / JCM 11321 / PZ6).